Reading from the N-terminus, the 356-residue chain is Alpha-N-acetylneuraminide alpha-2,8-sialyltransferase (356 aa).

Topologically, residues 1–29 are cytoplasmic; it reads MSPCGRARRQTSRGAMAVLAWKFPRTRLP. The chain crosses the membrane as a helical; Signal-anchor for type II membrane protein span at residues 30-48; the sequence is MGASALCVVVLCWLYIFPV. Over 49–356 the chain is Lumenal; that stretch reads YRLPNEKEIV…CEDTSLQPTS (308 aa). N-linked (GlcNAc...) asparagine glycans are attached at residues asparagine 71 and asparagine 119. Intrachain disulfides connect cysteine 138/cysteine 287 and cysteine 152/cysteine 347. Asparagine 143 and asparagine 166 together coordinate CMP-N-acetyl-beta-neuraminate. Asparagine 214 and asparagine 245 each carry an N-linked (GlcNAc...) asparagine glycan. Residues serine 274, threonine 275, glycine 276, tryptophan 296, and histidine 310 each contribute to the CMP-N-acetyl-beta-neuraminate site. Histidine 322 acts as the Proton donor/acceptor in catalysis.

It belongs to the glycosyltransferase 29 family.

It is found in the golgi apparatus membrane. It catalyses the reaction an N-acetyl-alpha-neuraminyl-(2-&gt;3)-beta-D-galactosyl derivative + CMP-N-acetyl-beta-neuraminate = an N-acetyl-alpha-neuraminyl-(2-&gt;8)-N-acetyl-alpha-neuraminyl-(2-&gt;3)-beta-D-galactosyl derivative + CMP + H(+). The enzyme catalyses a ganglioside GM3 (d18:1(4E)) + CMP-N-acetyl-beta-neuraminate = a ganglioside GD3 (d18:1(4E)) + CMP + H(+). It carries out the reaction a ganglioside GD3 (d18:1(4E)) + CMP-N-acetyl-beta-neuraminate = a ganglioside GT3 (d18:1(4E)) + CMP + H(+). The catalysed reaction is a ganglioside GD1a (d18:1(4E)) + CMP-N-acetyl-beta-neuraminate = a ganglioside GT1a (d18:1(4E)) + CMP + H(+). It catalyses the reaction a ganglioside GT1b (d18:1(4E)) + CMP-N-acetyl-beta-neuraminate = a ganglioside GQ1b (d18:1(4E)) + CMP + H(+). The enzyme catalyses a ganglioside GM1b (d18:1(4E)) + CMP-N-acetyl-beta-neuraminate = a ganglioside GD1c (d18:1(4E)) + CMP + H(+). It carries out the reaction a ganglioside GD3 + CMP-N-acetyl-beta-neuraminate = a ganglioside GT3 + CMP + H(+). The catalysed reaction is [alpha-N-acetylneuraminyl-(2-&gt;8)](n)-alpha-N-acetylneuraminyl-(2-&gt;8)-alpha-N-acetylneuraminyl-(2-&gt;3)-beta-D-galactosyl-(1-&gt;4)-beta-D-glucosyl-(1&lt;-&gt;1)-ceramide + CMP-N-acetyl-beta-neuraminate = [alpha-N-acetylneuraminyl-(2-&gt;8)](n+1)-alpha-N-acetylneuraminyl-(2-&gt;8)-alpha-N-acetylneuraminyl-(2-&gt;3)-beta-D-galactosyl-(1-&gt;4)-beta-D-glucosyl-(1&lt;-&gt;1)-ceramide + CMP + H(+). Its pathway is protein modification; protein glycosylation. It functions in the pathway lipid metabolism; sphingolipid metabolism. Functionally, catalyzes the addition of sialic acid in alpha 2,8-linkage to the sialic acid moiety of the ganglioside GM3 to form ganglioside GD3; gangliosides are a subfamily of complex glycosphingolipds that contain one or more residues of sialic acid. Can catalyze the addition of a second alpha-2,8- sialic acid to GD3 to form GT3. Can use GM1b, GD1a and GT1b as acceptor substrates to synthesize GD1c, GT1a and GQ1b respectively. The protein is Alpha-N-acetylneuraminide alpha-2,8-sialyltransferase of Pan troglodytes (Chimpanzee).